Here is a 629-residue protein sequence, read N- to C-terminus: 1-deoxy-D-xylulose-5-phosphate synthase (629 aa).

Thiamine diphosphate-binding positions include His85 and 126 to 128 (GHS). Asp157 contributes to the Mg(2+) binding site. Residues 158 to 159 (GS), Asn186, Tyr293, and Glu373 contribute to the thiamine diphosphate site. Mg(2+) is bound at residue Asn186.

This sequence belongs to the transketolase family. DXPS subfamily. As to quaternary structure, homodimer. Mg(2+) is required as a cofactor. Requires thiamine diphosphate as cofactor.

It catalyses the reaction D-glyceraldehyde 3-phosphate + pyruvate + H(+) = 1-deoxy-D-xylulose 5-phosphate + CO2. It functions in the pathway metabolic intermediate biosynthesis; 1-deoxy-D-xylulose 5-phosphate biosynthesis; 1-deoxy-D-xylulose 5-phosphate from D-glyceraldehyde 3-phosphate and pyruvate: step 1/1. Catalyzes the acyloin condensation reaction between C atoms 2 and 3 of pyruvate and glyceraldehyde 3-phosphate to yield 1-deoxy-D-xylulose-5-phosphate (DXP). This chain is 1-deoxy-D-xylulose-5-phosphate synthase, found in Helicobacter hepaticus (strain ATCC 51449 / 3B1).